The sequence spans 59 residues: Chromatin protein Cren7 (59 aa).

This sequence belongs to the Cren7 family. In terms of assembly, monomer. Methylated at multiple sites, to varying extents.

Its subcellular location is the chromosome. It is found in the cytoplasm. In terms of biological role, a chromatin protein, binds double-stranded DNA without sequence specificity. Constrains negative DNA supercoils. This chain is Chromatin protein Cren7, found in Sulfolobus acidocaldarius (strain ATCC 33909 / DSM 639 / JCM 8929 / NBRC 15157 / NCIMB 11770).